A 269-amino-acid chain; its full sequence is Aminodeoxychorismate lyase (269 aa).

Lys140 is modified (N6-(pyridoxal phosphate)lysine).

It belongs to the class-IV pyridoxal-phosphate-dependent aminotransferase family. Homodimer. Requires pyridoxal 5'-phosphate as cofactor.

The enzyme catalyses 4-amino-4-deoxychorismate = 4-aminobenzoate + pyruvate + H(+). It functions in the pathway cofactor biosynthesis; tetrahydrofolate biosynthesis; 4-aminobenzoate from chorismate: step 2/2. Its function is as follows. Involved in the biosynthesis of p-aminobenzoate (PABA), a precursor of tetrahydrofolate. Converts 4-amino-4-deoxychorismate into 4-aminobenzoate (PABA) and pyruvate. This Escherichia coli (strain K12) protein is Aminodeoxychorismate lyase (pabC).